The sequence spans 582 residues: 15-cis-phytoene desaturase, chloroplastic/chromoplastic (582 aa).

A chloroplast and chromoplast-targeting transit peptide spans 1–93; that stretch reads MNLLGSISTG…ELENTINFLE (93 aa). FAD is bound by residues Ala-121, 140–141, Lys-148, 165–166, and Tyr-171; these read EA and HI. Arg-306 lines the substrate pocket. Asp-537 lines the FAD pocket. Ala-545 serves as a coordination point for substrate. An FAD-binding site is contributed by Met-547.

The protein belongs to the carotenoid/retinoid oxidoreductase family. Homotetramer. FAD serves as cofactor. As to expression, expressed in flower buds and lips. Lower expression in leaves and roots.

The protein localises to the plastid. It localises to the chloroplast. Its subcellular location is the chromoplast. The protein resides in the membrane. The enzyme catalyses 2 a plastoquinone + 15-cis-phytoene = 9,9',15-tri-cis-zeta-carotene + 2 a plastoquinol. It functions in the pathway carotenoid biosynthesis; lycopene biosynthesis. Converts phytoene into zeta-carotene via the intermediary of phytofluene by the symmetrical introduction of two double bonds at the C-11 and C-11' positions of phytoene with a concomitant isomerization of two neighboring double bonds at the C9 and C9' positions from trans to cis. In Oncidium hybrid cultivar (Orchid), this protein is 15-cis-phytoene desaturase, chloroplastic/chromoplastic (PDS).